A 139-amino-acid polypeptide reads, in one-letter code: Actin-depolymerizing factor 1 (139 aa).

The ADF-H domain maps to 5 to 139 (SSGLAVNDEC…SLDIVRSRTN (135 aa)).

This sequence belongs to the actin-binding proteins ADF family. Expressed in pollen.

In terms of biological role, actin-depolymerizing protein. Severs actin filaments (F-actin) and binds to actin monomers. The polypeptide is Actin-depolymerizing factor 1 (ADF1) (Zea mays (Maize)).